An 86-amino-acid chain; its full sequence is Anti-adapter protein IraP (86 aa).

Positions 1–36 form a coiled coil; it reads MKNLIAELLFKLAQKEEESKELCAQVEALEIIVTAM.

This sequence belongs to the IraP family. As to quaternary structure, interacts with RssB.

It localises to the cytoplasm. Its function is as follows. Inhibits RpoS proteolysis by regulating RssB activity, thereby increasing the stability of the sigma stress factor RpoS especially during phosphate starvation, but also in stationary phase and during nitrogen starvation. Its effect on RpoS stability is due to its interaction with RssB, which probably blocks the interaction of RssB with RpoS, and the consequent delivery of the RssB-RpoS complex to the ClpXP protein degradation pathway. This chain is Anti-adapter protein IraP, found in Escherichia coli O7:K1 (strain IAI39 / ExPEC).